Consider the following 404-residue polypeptide: Serine/threonine transporter SstT (404 aa).

8 consecutive transmembrane segments (helical) span residues 17–37 (IGIG…LTGF), 39–59 (ILGK…VFAL), 75–95 (MTLI…VAVL), 138–158 (ALAT…GLAL), 179–199 (IVVW…FTTI), 212–232 (FLIL…NPLI), 287–307 (IPLG…VLTL), and 313–333 (FGIP…AVSA).

This sequence belongs to the dicarboxylate/amino acid:cation symporter (DAACS) (TC 2.A.23) family.

It localises to the cell membrane. It carries out the reaction L-serine(in) + Na(+)(in) = L-serine(out) + Na(+)(out). It catalyses the reaction L-threonine(in) + Na(+)(in) = L-threonine(out) + Na(+)(out). In terms of biological role, involved in the import of serine and threonine into the cell, with the concomitant import of sodium (symport system). This Streptococcus pyogenes serotype M2 (strain MGAS10270) protein is Serine/threonine transporter SstT.